Consider the following 931-residue polypeptide: NEDD4-binding protein 1 (931 aa).

Positions 75-159 constitute a KH-like domain; the sequence is GKAVRSAKEY…VQQFVKLFEN (85 aa). 3 disordered regions span residues 289–329, 413–474, and 547–571; these read MTSK…HNDS, QEWS…TQVD, and CTSAKSKTAVHQKSAGPSPVQNSHS. Composition is skewed to basic and acidic residues over residues 290–309 and 319–329; these read TSKERQSCKRRFSDAEESLP and QEVKSVSHNDS. Positions 416-434 are enriched in polar residues; that stretch reads SSKTPKTTNLRLGSNANSS. Composition is skewed to basic and acidic residues over residues 435-444 and 456-467; these read HKLEDEDISC and NETRTERHKARD. Positions 547 to 557 are enriched in polar residues; it reads CTSAKSKTAVH. In terms of domain architecture, RNase NYN spans 659–811; the sequence is LKHIIIDGSN…LGRNGPRLDD (153 aa). Residues 841-863 form a disordered region; it reads LFMHVPNPASSSQQPKNRAHGDH. The interval 884–931 is coCUN; it reads RSASETVWLREALIKIFPDYEQRQKIDKILADHPFMRDLNALSAMVLD.

Belongs to the N4BP1 family.

The protein resides in the cytoplasm. Its subcellular location is the cytosol. The protein localises to the nucleus. It is found in the nucleolus. It localises to the PML body. In terms of biological role, potent suppressor of cytokine production that acts as a regulator of innate immune signaling and inflammation. Acts as a key negative regulator of select cytokine and chemokine responses elicited by TRIF-independent Toll-like receptors (TLRs), thereby limiting inflammatory cytokine responses to minor insults. Has ribonuclease activity. The polypeptide is NEDD4-binding protein 1 (Gallus gallus (Chicken)).